The sequence spans 93 residues: uncharacterized protein (93 aa).

The helical transmembrane segment at 12–32 (VVGGLSFWTFSAGLIMIVNAL) threads the bilayer. The disordered stretch occupies residues 47–66 (TANANGSDDDNENKNNSYRS).

The protein resides in the cell membrane. This is an uncharacterized protein from Mycoplasma genitalium (strain ATCC 33530 / DSM 19775 / NCTC 10195 / G37) (Mycoplasmoides genitalium).